Consider the following 1235-residue polypeptide: ATP-dependent helicase/nuclease subunit A (1235 aa).

The UvrD-like helicase ATP-binding domain occupies 12 to 482; that stretch reads ALWTDDQWKA…IDLSQNFRSR (471 aa). Residue 33 to 40 coordinates ATP; it reads AAAGSGKT. One can recognise a UvrD-like helicase C-terminal domain in the interval 509–800; the sequence is AAELTLGASF…RMMTIHASKG (292 aa).

Belongs to the helicase family. AddA subfamily. As to quaternary structure, heterodimer of AddA and AddB/RexB. Requires Mg(2+) as cofactor.

The catalysed reaction is Couples ATP hydrolysis with the unwinding of duplex DNA by translocating in the 3'-5' direction.. It catalyses the reaction ATP + H2O = ADP + phosphate + H(+). Functionally, the heterodimer acts as both an ATP-dependent DNA helicase and an ATP-dependent, dual-direction single-stranded exonuclease. Recognizes the chi site generating a DNA molecule suitable for the initiation of homologous recombination. The AddA nuclease domain is required for chi fragment generation; this subunit has the helicase and 3' -&gt; 5' nuclease activities. The polypeptide is ATP-dependent helicase/nuclease subunit A (Listeria innocua serovar 6a (strain ATCC BAA-680 / CLIP 11262)).